The sequence spans 84 residues: Inactive transposase YbfQ (84 aa).

The chain is Inactive transposase YbfQ (ybfQ) from Escherichia coli (strain K12).